Here is a 616-residue protein sequence, read N- to C-terminus: Dihydroxy-acid dehydratase (616 aa).

Residue aspartate 81 coordinates Mg(2+). Cysteine 122 is a [2Fe-2S] cluster binding site. The Mg(2+) site is built by aspartate 123 and lysine 124. An N6-carboxylysine modification is found at lysine 124. Cysteine 195 contacts [2Fe-2S] cluster. Glutamate 491 contributes to the Mg(2+) binding site. Catalysis depends on serine 517, which acts as the Proton acceptor.

Belongs to the IlvD/Edd family. As to quaternary structure, homodimer. [2Fe-2S] cluster serves as cofactor. It depends on Mg(2+) as a cofactor.

It carries out the reaction (2R)-2,3-dihydroxy-3-methylbutanoate = 3-methyl-2-oxobutanoate + H2O. The enzyme catalyses (2R,3R)-2,3-dihydroxy-3-methylpentanoate = (S)-3-methyl-2-oxopentanoate + H2O. Its pathway is amino-acid biosynthesis; L-isoleucine biosynthesis; L-isoleucine from 2-oxobutanoate: step 3/4. The protein operates within amino-acid biosynthesis; L-valine biosynthesis; L-valine from pyruvate: step 3/4. In terms of biological role, functions in the biosynthesis of branched-chain amino acids. Catalyzes the dehydration of (2R,3R)-2,3-dihydroxy-3-methylpentanoate (2,3-dihydroxy-3-methylvalerate) into 2-oxo-3-methylpentanoate (2-oxo-3-methylvalerate) and of (2R)-2,3-dihydroxy-3-methylbutanoate (2,3-dihydroxyisovalerate) into 2-oxo-3-methylbutanoate (2-oxoisovalerate), the penultimate precursor to L-isoleucine and L-valine, respectively. The sequence is that of Dihydroxy-acid dehydratase from Escherichia coli O157:H7 (strain EC4115 / EHEC).